Consider the following 500-residue polypeptide: Aspartyl/glutamyl-tRNA(Asn/Gln) amidotransferase subunit B (500 aa).

It belongs to the GatB/GatE family. GatB subfamily. In terms of assembly, heterotrimer of A, B and C subunits.

It catalyses the reaction L-glutamyl-tRNA(Gln) + L-glutamine + ATP + H2O = L-glutaminyl-tRNA(Gln) + L-glutamate + ADP + phosphate + H(+). The catalysed reaction is L-aspartyl-tRNA(Asn) + L-glutamine + ATP + H2O = L-asparaginyl-tRNA(Asn) + L-glutamate + ADP + phosphate + 2 H(+). Its function is as follows. Allows the formation of correctly charged Asn-tRNA(Asn) or Gln-tRNA(Gln) through the transamidation of misacylated Asp-tRNA(Asn) or Glu-tRNA(Gln) in organisms which lack either or both of asparaginyl-tRNA or glutaminyl-tRNA synthetases. The reaction takes place in the presence of glutamine and ATP through an activated phospho-Asp-tRNA(Asn) or phospho-Glu-tRNA(Gln). The polypeptide is Aspartyl/glutamyl-tRNA(Asn/Gln) amidotransferase subunit B (Brucella melitensis biotype 2 (strain ATCC 23457)).